The chain runs to 334 residues: MLNTLIVGASGYAGAELVTCVNRHPHMNITALTVSAQSNDAGKLISDLHPQLKGIVDLPLQPMSDISEFSPGVDVVFLATAHEVSHDLAPQFLDAGCVVFDLSGAFRVNDATFYEKYYGFTHQYPELLEQAAYGLAEWCGNKLKEANLIAVPGCYPTAAQLALKPLIDADLLDLNQWPVINATSGVSGAGRKAAISNSFCEVSLQPYGVFTHRHQPEIATHLGADVIFTPHLGNFPRGILETITCRLKPGVTQAQVAQALQQAYAHKPLVRLYDKGVPALKNVVGLPFCDIGFAVQGEHLIIVATEDNLLKGAAAQAVQCANIRFGYAETQSLI.

Residue C154 is part of the active site.

The protein belongs to the NAGSA dehydrogenase family. Type 1 subfamily.

The protein resides in the cytoplasm. It carries out the reaction N-acetyl-L-glutamate 5-semialdehyde + phosphate + NADP(+) = N-acetyl-L-glutamyl 5-phosphate + NADPH + H(+). The protein operates within amino-acid biosynthesis; L-arginine biosynthesis; N(2)-acetyl-L-ornithine from L-glutamate: step 3/4. Catalyzes the NADPH-dependent reduction of N-acetyl-5-glutamyl phosphate to yield N-acetyl-L-glutamate 5-semialdehyde. This chain is N-acetyl-gamma-glutamyl-phosphate reductase, found in Escherichia coli O157:H7.